Reading from the N-terminus, the 299-residue chain is MLFDQIASNKRKTWILLLVFFLLLALVGYAVGYLFIRSGLGGLVIALIIGFIYALSMIFQSTEIVMSMNGAREVDEQTAPDLYHVVEDMALVAQIPMPRVFIIDDPALNAFATGSNPQNAAVAATSGLLAIMNREELEAVMGHEVSHIRNYDIRISTIAVALASAITMLSSMAGRMMWWGGAGRRRSDDDRDGNGLEIIMLVVSLLAIVLAPLAATLVQLAISRQREFLADASSVELTRNPQGMINALDKLDNSKPMSRHVDDASSALYINDPKKGGGFQKLFYTHPPISERIERLKHM.

2 helical membrane passes run 15–35 (ILLL…GYLF) and 39–59 (GLGG…SMIF). Residue His143 coordinates Zn(2+). Glu144 is an active-site residue. His147 lines the Zn(2+) pocket. 2 helical membrane passes run 158-178 (IAVA…RMMW) and 198-218 (IIML…ATLV). Glu227 contacts Zn(2+).

It belongs to the peptidase M48B family. The cofactor is Zn(2+).

Its subcellular location is the cell membrane. The chain is Protease HtpX homolog from Streptococcus pneumoniae serotype 19F (strain G54).